We begin with the raw amino-acid sequence, 437 residues long: ATP-dependent protease ATPase subunit HslU (437 aa).

ATP is bound by residues Val-18, Gly-60 to Glu-65, Asp-250, Glu-315, and Arg-387.

Belongs to the ClpX chaperone family. HslU subfamily. A double ring-shaped homohexamer of HslV is capped on each side by a ring-shaped HslU homohexamer. The assembly of the HslU/HslV complex is dependent on binding of ATP.

The protein resides in the cytoplasm. Its function is as follows. ATPase subunit of a proteasome-like degradation complex; this subunit has chaperone activity. The binding of ATP and its subsequent hydrolysis by HslU are essential for unfolding of protein substrates subsequently hydrolyzed by HslV. HslU recognizes the N-terminal part of its protein substrates and unfolds these before they are guided to HslV for hydrolysis. The sequence is that of ATP-dependent protease ATPase subunit HslU from Desulfovibrio desulfuricans (strain ATCC 27774 / DSM 6949 / MB).